The following is a 557-amino-acid chain: Leucine-rich glioma-inactivated protein 1 (557 aa).

The first 34 residues, 1-34 (MESERSKRMGNACIPLKRIAYFLCLLSALLLTEG), serve as a signal peptide directing secretion. The region spanning 35 to 72 (KKPAKPKCPAVCTCTKDNALCENARSIPRTVPPDVISL) is the LRRNT domain. LRR repeat units lie at residues 92–113 (SLQL…AFIG), 116–137 (HLEY…TFRG), and 140–161 (SLIH…IFKG). The region spanning 173–223 (NSFNCDCKLKWLVEWLGHTNATVEDIYCEGPPEYKKRKINSLSSKDFDCII) is the LRRCT domain. Asparagine 192 carries an N-linked (GlcNAc...) asparagine glycan. 7 EAR repeats span residues 225 to 267 (EFAK…EWDH), 271 to 313 (TFRN…KRDS), 317 to 364 (KFIK…KWNG), 366 to 415 (GFYS…QWNK), 419 to 462 (SFTN…KWGG), 464 to 506 (SFQD…NWDA), and 510 to 552 (KFVK…KHVI). N-linked (GlcNAc...) asparagine glycosylation is present at asparagine 277. Residue asparagine 422 is glycosylated (N-linked (GlcNAc...) asparagine).

As to quaternary structure, oligomer. Interacts with KCNA1 within a complex containing KCNA1, KCNA4 and KCNAB1. Part of a complex containing ADAM22, DLG4/PSD95 and CACNG2 (stargazin). Can bind to ADAM11 and ADAM23. Post-translationally, glycosylated.

Its subcellular location is the secreted. It is found in the synapse. The protein localises to the cytoplasm. Functionally, regulates voltage-gated potassium channels assembled from KCNA1, KCNA4 and KCNAB1. It slows down channel inactivation by precluding channel closure mediated by the KCNAB1 subunit. Ligand for ADAM22 that positively regulates synaptic transmission mediated by AMPA-type glutamate receptors. Plays a role in suppressing the production of MMP1/3 through the phosphatidylinositol 3-kinase/ERK pathway. This chain is Leucine-rich glioma-inactivated protein 1 (LGI1), found in Pan troglodytes (Chimpanzee).